The primary structure comprises 96 residues: UPF0184 protein CG14818 (96 aa).

Disordered regions lie at residues M1–M28 and I70–K96. Residues D8 to Q21 show a composition bias toward polar residues. The stretch at Q21–A77 forms a coiled coil. Over residues E72 to M85 the composition is skewed to acidic residues.

It belongs to the UPF0184 (EST00098) family.

This chain is UPF0184 protein CG14818, found in Drosophila melanogaster (Fruit fly).